Consider the following 696-residue polypeptide: Polyribonucleotide nucleotidyltransferase (696 aa).

Mg(2+) contacts are provided by aspartate 486 and aspartate 492. Residues 553–612 (PRITQKQIPKDRIGELIGPGGKMIRAIIEQSGSEISVDDSGKVTIASPSEESKEKAIAMI) enclose the KH domain. The S1 motif domain occupies 622 to 690 (GKIYDGVIKR…KMGKIDLSRK (69 aa)).

Belongs to the polyribonucleotide nucleotidyltransferase family. It depends on Mg(2+) as a cofactor.

The protein localises to the cytoplasm. The enzyme catalyses RNA(n+1) + phosphate = RNA(n) + a ribonucleoside 5'-diphosphate. Its function is as follows. Involved in mRNA degradation. Catalyzes the phosphorolysis of single-stranded polyribonucleotides processively in the 3'- to 5'-direction. This is Polyribonucleotide nucleotidyltransferase from Leptospira biflexa serovar Patoc (strain Patoc 1 / ATCC 23582 / Paris).